We begin with the raw amino-acid sequence, 358 residues long: Ion-translocating oxidoreductase complex subunit D (358 aa).

Transmembrane regions (helical) follow at residues 19–39 (IMLWVILAMMPAFFTQIYYFG), 41–61 (GVVLQSALAIGTAIIAEFIAI), 79–99 (LTALILAMAIPPYAPYWIIII), and 125–145 (IGYVILLISFPLQMTTWMPPI). Threonine 186 carries the FMN phosphoryl threonine modification. Helical transmembrane passes span 220–240 (FAQGWWQINVAFLAGGIFLIL), 248–268 (IPVAMLVTFFCLATATAFTGF), 271–291 (LSAISQLVSGAMMFGAFFIAT), 297–317 (SITPRGKIIFGALVGLFVYLI), and 321–341 (GNYPDGVAFAILLSNICVPLI).

Belongs to the NqrB/RnfD family. In terms of assembly, the complex is composed of six subunits: RnfA, RnfB, RnfC, RnfD, RnfE and RnfG. It depends on FMN as a cofactor.

The protein resides in the cell inner membrane. In terms of biological role, part of a membrane-bound complex that couples electron transfer with translocation of ions across the membrane. The chain is Ion-translocating oxidoreductase complex subunit D from Haemophilus influenzae (strain 86-028NP).